A 1402-amino-acid polypeptide reads, in one-letter code: DNA-directed RNA polymerase subunit beta' (1402 aa).

Residues C71, C73, C86, and C89 each contribute to the Zn(2+) site. Mg(2+)-binding residues include D462, D464, and D466. Zn(2+) contacts are provided by C811, C885, C892, and C895.

This sequence belongs to the RNA polymerase beta' chain family. As to quaternary structure, the RNAP catalytic core consists of 2 alpha, 1 beta, 1 beta' and 1 omega subunit. When a sigma factor is associated with the core the holoenzyme is formed, which can initiate transcription. Mg(2+) is required as a cofactor. The cofactor is Zn(2+).

The enzyme catalyses RNA(n) + a ribonucleoside 5'-triphosphate = RNA(n+1) + diphosphate. Its function is as follows. DNA-dependent RNA polymerase catalyzes the transcription of DNA into RNA using the four ribonucleoside triphosphates as substrates. The sequence is that of DNA-directed RNA polymerase subunit beta' from Rhizobium etli (strain ATCC 51251 / DSM 11541 / JCM 21823 / NBRC 15573 / CFN 42).